Reading from the N-terminus, the 444-residue chain is U4/U6 snRNA-associated-splicing factor PRP24 (444 aa).

Over residues 1 to 16 the composition is skewed to basic and acidic residues; it reads MEYGHHARPDSKRPLD. The tract at residues 1-29 is disordered; sequence MEYGHHARPDSKRPLDEGSPAAAGLTSKK. Ser-19 is modified (phosphoserine). RRM domains lie at 41–116, 117–195, and 210–289; these read TTVL…HLTE, CTLW…VSNP, and REIM…LADK.

Monomer. Interacts with U6 snRNA SNR6 and the LSM2-8 complex (small nuclear RNA); to chaperone formation of the U4/U6-U5 tri-snRNP (small nuclear ribonucleoprotein) assembly, the protein is displaced from the U4/U6 snRNP once pairing is complete.

Its subcellular location is the nucleus. Its function is as follows. Functions as a recycling factor of the spliceosome, a machinery that forms on each precursor-messenger RNA (pre-mRNA) and catalyzes the removal of introns. Chaperones the re-annealing of U4 and U6 snRNAs (small nuclear RNAs) released from previous rounds of splicing, an initial step in reforming the U4/U6-U5 tri-snRNP (small nuclear ribonucleoprotein) that can reassemble into another spliceosome complex; this step involves binding U6 and facilitating the unwinding of the U6 internal stem loop, followed by base-pairing of U6 to U4. The sequence is that of U4/U6 snRNA-associated-splicing factor PRP24 (PRP24) from Saccharomyces cerevisiae (strain ATCC 204508 / S288c) (Baker's yeast).